A 104-amino-acid chain; its full sequence is Histone H4 (104 aa).

The segment at 1-21 is disordered; it reads MAGRGKVGKGYGKVGAKRHTK.

It belongs to the histone H4 family. As to quaternary structure, the nucleosome is a histone octamer containing two molecules each of H2A, H2B, H3 and H4 assembled in one H3-H4 heterotetramer and two H2A-H2B heterodimers. The octamer wraps approximately 147 bp of DNA.

The protein localises to the nucleus. It localises to the chromosome. Its function is as follows. Core component of nucleosome. Nucleosomes wrap and compact DNA into chromatin, limiting DNA accessibility to the cellular machineries which require DNA as a template. Histones thereby play a central role in transcription regulation, DNA repair, DNA replication and chromosomal stability. DNA accessibility is regulated via a complex set of post-translational modifications of histones, also called histone code, and nucleosome remodeling. The chain is Histone H4 from Sterkiella nova (Ciliate).